Here is a 150-residue protein sequence, read N- to C-terminus: Deoxyuridine 5'-triphosphate nucleotidohydrolase (150 aa).

Substrate contacts are provided by residues 69–71 (RSG), Asn82, 86–88 (LID), and Met96.

This sequence belongs to the dUTPase family. Mg(2+) is required as a cofactor.

It carries out the reaction dUTP + H2O = dUMP + diphosphate + H(+). The protein operates within pyrimidine metabolism; dUMP biosynthesis; dUMP from dCTP (dUTP route): step 2/2. Functionally, this enzyme is involved in nucleotide metabolism: it produces dUMP, the immediate precursor of thymidine nucleotides and it decreases the intracellular concentration of dUTP so that uracil cannot be incorporated into DNA. The chain is Deoxyuridine 5'-triphosphate nucleotidohydrolase from Acinetobacter baumannii (strain AB307-0294).